The primary structure comprises 257 residues: AA9 family lytic polysaccharide monooxygenase U (257 aa).

Positions 1 to 19 are cleaved as a signal peptide; it reads MKLYLAAFLGAVATPGAFA. Histidine 20 contacts Cu(2+). Residues asparagine 29 and asparagine 71 are each glycosylated (N-linked (GlcNAc...) asparagine). A disulfide bridge links cysteine 74 with cysteine 194. Histidine 113 contacts Cu(2+). Asparagine 161 is a glycosylation site (N-linked (GlcNAc...) asparagine). Position 189 (glutamine 189) interacts with O2. Tyrosine 191 is a Cu(2+) binding site.

The protein belongs to the polysaccharide monooxygenase AA9 family. Cu(2+) serves as cofactor.

Its subcellular location is the secreted. The catalysed reaction is [(1-&gt;4)-beta-D-glucosyl]n+m + reduced acceptor + O2 = 4-dehydro-beta-D-glucosyl-[(1-&gt;4)-beta-D-glucosyl]n-1 + [(1-&gt;4)-beta-D-glucosyl]m + acceptor + H2O.. Its function is as follows. Lytic polysaccharide monooxygenase (LPMO) that depolymerizes crystalline and amorphous polysaccharides via the oxidation of scissile alpha- or beta-(1-4)-glycosidic bonds, yielding C1 and C4 oxidation products. Catalysis by LPMOs requires the reduction of the active-site copper from Cu(II) to Cu(I) by a reducing agent and H(2)O(2) or O(2) as a cosubstrate. Shows no activity on wheat arabinoxylan, konjac glucomannan, acetylated spruce galactoglucomannan, or cellopentaose. The protein is AA9 family lytic polysaccharide monooxygenase U of Thermothielavioides terrestris (strain ATCC 38088 / NRRL 8126) (Thielavia terrestris).